We begin with the raw amino-acid sequence, 238 residues long: Large ribosomal subunit protein uL1 (238 aa).

This sequence belongs to the universal ribosomal protein uL1 family. As to quaternary structure, part of the 50S ribosomal subunit.

Its function is as follows. Binds directly to 23S rRNA. The L1 stalk is quite mobile in the ribosome, and is involved in E site tRNA release. Protein L1 is also a translational repressor protein, it controls the translation of the L11 operon by binding to its mRNA. The polypeptide is Large ribosomal subunit protein uL1 (Trichodesmium erythraeum (strain IMS101)).